The sequence spans 161 residues: Putative 2'-deoxynucleoside 5'-phosphate N-hydrolase 1 (161 aa).

Substrate is bound by residues 27–33 (FLSGSIR), Tyr-42, His-60, Glu-106, and 128–130 (SSM).

The protein belongs to the 2'-deoxynucleoside 5'-phosphate N-hydrolase 1 family. As to quaternary structure, monomer and homodimer.

It catalyses the reaction a pyrimidine 2'-deoxyribonucleoside 5'-phosphate + H2O = a pyrimidine nucleobase + 2-deoxy-D-ribose 5-phosphate. It carries out the reaction a purine 2'-deoxyribonucleoside 5'-phosphate + H2O = a purine nucleobase + 2-deoxy-D-ribose 5-phosphate. Its function is as follows. Catalyzes the cleavage of the N-glycosidic bond of deoxyribonucleoside 5'-monophosphates to yield deoxyribose 5-phosphate and a purine or pyrimidine base. In Methanosarcina mazei (strain ATCC BAA-159 / DSM 3647 / Goe1 / Go1 / JCM 11833 / OCM 88) (Methanosarcina frisia), this protein is Putative 2'-deoxynucleoside 5'-phosphate N-hydrolase 1.